The following is a 497-amino-acid chain: Lysophospholipid acyltransferase 5 (497 aa).

A run of 6 helical transmembrane segments spans residues 31-51 (LLTI…ISVI), 74-94 (GLDT…VLLL), 100-120 (IFLA…YFYT), 173-193 (LELL…QFPF), 213-235 (AGVR…LRYL), and 264-286 (SLYK…GLTY). Catalysis depends on residues Asn-322 and His-358. Residues 339 to 361 (FLNNRTISYGAALGFLAVWHGYH) traverse the membrane as a helical segment. Asn-398 is a glycosylation site (N-linked (GlcNAc...) asparagine). The next 2 helical transmembrane spans lie at 408-428 (FITL…AFVF) and 435-455 (IVVY…WAAF). A disordered region spans residues 469–497 (KLAGEDQKLQDSNTDKLVEEKKPEDKKSE). Residues 470–497 (LAGEDQKLQDSNTDKLVEEKKPEDKKSE) are compositionally biased toward basic and acidic residues. Ser-480 is subject to Phosphoserine.

Belongs to the membrane-bound acyltransferase family. As to expression, during gastrulation, expressed mainly along the midline in the presumptive mesoderm. During germ band elongation, expressed in mesoderm and endoderm primordia and in the cephalic furrow. Expression in mesoderm and endoderm lineages continues during germ band shortening. At the end of this process, no longer detected in somatic mesoderm or endoderm layer with expression restricted to anterior and posterior domains of the visceral mesoderm.

The protein localises to the endoplasmic reticulum. The protein resides in the membrane. The catalysed reaction is a 1-acyl-sn-glycero-3-phospho-L-serine + an acyl-CoA = a 1,2-diacyl-sn-glycero-3-phospho-L-serine + CoA. It catalyses the reaction 1-(9Z-octadecenoyl)-sn-glycero-3-phospho-L-serine + (9Z)-hexadecenoyl-CoA = 1-(9Z-octadecenoyl)-2-(9Z-hexadecenoyl)-sn-glycero-3-phospho-L-serine + CoA. It carries out the reaction a 1-acyl-sn-glycero-3-phosphocholine + an acyl-CoA = a 1,2-diacyl-sn-glycero-3-phosphocholine + CoA. The enzyme catalyses 1-hexadecanoyl-sn-glycero-3-phosphocholine + (9Z)-octadecenoyl-CoA = 1-hexadecanoyl-2-(9Z-octadecenoyl)-sn-glycero-3-phosphocholine + CoA. The catalysed reaction is (9Z,12Z)-octadecadienoyl-CoA + 1-hexadecanoyl-sn-glycero-3-phosphocholine = 1-hexadecanoyl-2-(9Z,12Z-octadecadienoyl)-sn-glycero-3-phosphocholine + CoA. It catalyses the reaction (5Z,8Z,11Z,14Z)-eicosatetraenoyl-CoA + 1-hexadecanoyl-sn-glycero-3-phosphocholine = 1-hexadecanoyl-2-(5Z,8Z,11Z,14Z-eicosatetraenoyl)-sn-glycero-3-phosphocholine + CoA. It carries out the reaction (9Z)-hexadecenoyl-CoA + 1-hexadecanoyl-sn-glycero-3-phosphocholine = 1-hexadecanoyl-2-(9Z-hexadecenoyl)-sn-glycero-3-phosphocholine + CoA. Its pathway is lipid metabolism; phospholipid metabolism. Acyltransferase that mediates the acylation of lysophospholipids to produce phospholipids (glycerophospholipids). Highest activity with lysophosphatidylcholine (1-acyl-sn-glycero-3-phosphocholine or LPC) producing phosphatidylcholine (1,2-diacyl-sn-glycero-3-phosphocholine or PC) (LPCAT activity), but also converts lysophosphatidylserine (1-acyl-2-hydroxy-sn-glycero-3-phospho-L-serine or LPS) to phosphatidylserine (1,2-diacyl-sn-glycero-3-phospho-L-serine or PS) (LPSAT activity). Has a preference for unsaturated fatty acids of at least 16 carbons such as oleoyl-CoA ((9Z)-octadecenoyl-CoA) and palmitoleoyl-CoA ((9Z)-hexadecenoyl-CoA). Glycerophospholipids are important structural and functional components of cellular membrane, acyl-chain remodeling regulates the molecular species distribution of glycerophospholipids which can affect membrane fluidity and curvature. Essential for fertility and viability together with Oysgedart (Oys). Required for germ cells to migrate into the mesoderm. This is Lysophospholipid acyltransferase 5 from Drosophila melanogaster (Fruit fly).